The chain runs to 105 residues: Flagellar transcriptional regulator FlhD (105 aa).

It belongs to the FlhD family. As to quaternary structure, homodimer; disulfide-linked. Forms a heterohexamer composed of two FlhC and four FlhD subunits. Each FlhC binds a FlhD dimer, forming a heterotrimer, and a hexamer assembles by dimerization of two heterotrimers.

The protein resides in the cytoplasm. Functionally, functions in complex with FlhC as a master transcriptional regulator that regulates transcription of several flagellar and non-flagellar operons by binding to their promoter region. Activates expression of class 2 flagellar genes, including fliA, which is a flagellum-specific sigma factor that turns on the class 3 genes. Also regulates genes whose products function in a variety of physiological pathways. The chain is Flagellar transcriptional regulator FlhD from Nitrosomonas eutropha (strain DSM 101675 / C91 / Nm57).